Consider the following 131-residue polypeptide: Profilin-6 (131 aa).

Residues Cys13 and Cys115 are joined by a disulfide bond. An Involved in PIP2 interaction motif is present at residues 81 to 97 (AVIRGKKGSGGITVKKT). Thr111 is subject to Phosphothreonine.

Belongs to the profilin family. As to quaternary structure, occurs in many kinds of cells as a complex with monomeric actin in a 1:1 ratio. Phosphorylated by MAP kinases.

The protein localises to the cytoplasm. It localises to the cytoskeleton. Its function is as follows. Binds to actin and affects the structure of the cytoskeleton. At high concentrations, profilin prevents the polymerization of actin, whereas it enhances it at low concentrations. The sequence is that of Profilin-6 from Zea mays (Maize).